A 220-amino-acid chain; its full sequence is Guanylate kinase (220 aa).

One can recognise a Guanylate kinase-like domain in the interval 15–194 (GLMLVISSPS…AFDAVQSIVK (180 aa)). 22–29 (SPSGAGKS) lines the ATP pocket.

This sequence belongs to the guanylate kinase family.

It localises to the cytoplasm. It catalyses the reaction GMP + ATP = GDP + ADP. Essential for recycling GMP and indirectly, cGMP. The sequence is that of Guanylate kinase from Rhizobium etli (strain ATCC 51251 / DSM 11541 / JCM 21823 / NBRC 15573 / CFN 42).